The following is a 446-amino-acid chain: Probable glycine dehydrogenase (decarboxylating) subunit 1 (446 aa).

Belongs to the GcvP family. N-terminal subunit subfamily. As to quaternary structure, the glycine cleavage system is composed of four proteins: P, T, L and H. In this organism, the P 'protein' is a heterodimer of two subunits.

It catalyses the reaction N(6)-[(R)-lipoyl]-L-lysyl-[glycine-cleavage complex H protein] + glycine + H(+) = N(6)-[(R)-S(8)-aminomethyldihydrolipoyl]-L-lysyl-[glycine-cleavage complex H protein] + CO2. Functionally, the glycine cleavage system catalyzes the degradation of glycine. The P protein binds the alpha-amino group of glycine through its pyridoxal phosphate cofactor; CO(2) is released and the remaining methylamine moiety is then transferred to the lipoamide cofactor of the H protein. The polypeptide is Probable glycine dehydrogenase (decarboxylating) subunit 1 (Xanthobacter autotrophicus (strain ATCC BAA-1158 / Py2)).